We begin with the raw amino-acid sequence, 313 residues long: Apolipoprotein E (313 aa).

Positions 1–18 are cleaved as a signal peptide; that stretch reads MKVLWVALVITLLAGCQA. Repeat copies occupy residues 79-100, 101-122, 123-144, 145-166, 167-188, 189-209, 210-229, and 230-251. The tract at residues 79-251 is 8 X 22 AA approximate tandem repeats; sequence VLMDETMKEV…HLEEIREQLE (173 aa). The LDL and other lipoprotein receptors binding stretch occupies residues 157–167; it reads HLRKLRKRLLR. 161–164 contacts heparin; sequence LRKR. The lipid-binding and lipoprotein association stretch occupies residues 209-286; the sequence is AGTLASQTLR…SWFEPLVEDM (78 aa). 225–232 lines the heparin pocket; that stretch reads HQKLRGRV. The segment at 262–313 is homooligomerization; sequence SQIRLQAEAFQARLKSWFEPLVEDMQRQWAGLVEKVQLAMATSSTSAPSENH. Residues 274 to 286 form a specificity for association with VLDL region; sequence RLKSWFEPLVEDM.

The protein belongs to the apolipoprotein A1/A4/E family. In terms of assembly, homotetramer. May interact with ABCA1; functionally associated with ABCA1 in the biogenesis of HDLs. May interact with APP/A4 amyloid-beta peptide; the interaction is extremely stable in vitro but its physiological significance is unclear. May interact with MAPT. May interact with MAP2. In the cerebrospinal fluid, interacts with secreted SORL1. Interacts with PMEL; this allows the loading of PMEL luminal fragment on ILVs to induce fibril nucleation. Post-translationally, APOE exists as multiple glycosylated and sialylated glycoforms within cells and in plasma. The extent of glycosylation and sialylation are tissue and context specific. In terms of processing, glycated in plasma VLDL. Phosphorylated by FAM20C in the extracellular medium.

The protein resides in the secreted. It is found in the extracellular space. Its subcellular location is the extracellular matrix. It localises to the extracellular vesicle. The protein localises to the endosome. The protein resides in the multivesicular body. In terms of biological role, APOE is an apolipoprotein, a protein associating with lipid particles, that mainly functions in lipoprotein-mediated lipid transport between organs via the plasma and interstitial fluids. APOE is a core component of plasma lipoproteins and is involved in their production, conversion and clearance. Apolipoproteins are amphipathic molecules that interact both with lipids of the lipoprotein particle core and the aqueous environment of the plasma. As such, APOE associates with chylomicrons, chylomicron remnants, very low density lipoproteins (VLDL) and intermediate density lipoproteins (IDL) but shows a preferential binding to high-density lipoproteins (HDL). It also binds a wide range of cellular receptors including the LDL receptor/LDLR and the very low-density lipoprotein receptor/VLDLR that mediate the cellular uptake of the APOE-containing lipoprotein particles. Finally, APOE also has a heparin-binding activity and binds heparan-sulfate proteoglycans on the surface of cells, a property that supports the capture and the receptor-mediated uptake of APOE-containing lipoproteins by cells. The protein is Apolipoprotein E (APOE) of Balaenoptera acutorostrata scammoni (North Pacific minke whale).